A 442-amino-acid polypeptide reads, in one-letter code: HTH-type transcriptional regulator NorG (442 aa).

An HTH gntR-type domain is found at 2–46 (KIPSHRQLAIQYNVNRVTIIKSIELLEAEGFIYTKVGSGTYVNDY). A DNA-binding region (H-T-H motif) is located at residues 6-25 (HRQLAIQYNVNRVTIIKSIE). N6-(pyridoxal phosphate)lysine is present on lysine 288.

The protein in the C-terminal section; belongs to the class-I pyridoxal-phosphate-dependent aminotransferase family. The cofactor is pyridoxal 5'-phosphate.

Its function is as follows. Positively regulates the expression of the NorB efflux pump and negatively regulates the expression of the AbcA efflux pump. Binds specifically to the promoters of norA, norB and norC and abcA genes. Could also have an aminotransferase activity. This Staphylococcus aureus (strain USA300) protein is HTH-type transcriptional regulator NorG (norG).